The following is a 184-amino-acid chain: Large ribosomal subunit protein uL6 (184 aa).

The protein belongs to the universal ribosomal protein uL6 family. Part of the 50S ribosomal subunit.

This protein binds to the 23S rRNA, and is important in its secondary structure. It is located near the subunit interface in the base of the L7/L12 stalk, and near the tRNA binding site of the peptidyltransferase center. The sequence is that of Large ribosomal subunit protein uL6 from Thermotoga maritima (strain ATCC 43589 / DSM 3109 / JCM 10099 / NBRC 100826 / MSB8).